The primary structure comprises 703 residues: Arylphorin subunit beta (703 aa).

The signal sequence occupies residues 1-16 (MKTVIILAGLVALALG). 2 N-linked (GlcNAc...) asparagine glycosylation sites follow: asparagine 72 and asparagine 211.

The protein belongs to the hemocyanin family. In terms of assembly, arylphorin is a hexamer of subunits alpha and beta. As to expression, fat body.

The protein localises to the secreted. It localises to the extracellular space. In terms of biological role, arylphorin is a larval storage protein (LSP) which may serve as a storage protein used primarily as a source of aromatic amino acids for protein synthesis during metamorphosis. It is a constituent of the sclerotizing system of the cuticle, and serves as a carrier for ecdysteroid hormone. The protein is Arylphorin subunit beta of Manduca sexta (Tobacco hawkmoth).